Reading from the N-terminus, the 134-residue chain is MVFAAWYLKFAFFVALAFSIIGGSMASSLVLPHASELKGVWQLSDKHQQCDVSLTDQPLPEGSIWSLNGDNDCLAYMFGEVPAGWRPTPDGLTITDEQGSGLAFFANEPDGWFARFADGRELMMKPNKTNKKNE.

A signal peptide spans 1 to 26 (MVFAAWYLKFAFFVALAFSIIGGSMA). An intrachain disulfide couples cysteine 50 to cysteine 73.

The protein belongs to the protease inhibitor I38 family.

The protein resides in the periplasm. Functionally, inhibitor of the alkaline protease. In Photorhabdus luminescens (Xenorhabdus luminescens), this protein is Alkaline proteinase inhibitor (inh).